Reading from the N-terminus, the 255-residue chain is Undecaprenyl-diphosphatase (255 aa).

6 helical membrane-spanning segments follow: residues 1-21 (MDII…FLPI), 75-95 (IIIS…IVYQ), 96-116 (LFTV…FLIV), 174-194 (TEFS…FDIV), 203-223 (GDIS…LITI), and 234-254 (NFVP…MFFV).

This sequence belongs to the UppP family.

Its subcellular location is the cell membrane. It carries out the reaction di-trans,octa-cis-undecaprenyl diphosphate + H2O = di-trans,octa-cis-undecaprenyl phosphate + phosphate + H(+). Catalyzes the dephosphorylation of undecaprenyl diphosphate (UPP). The polypeptide is Undecaprenyl-diphosphatase (Methanococcus aeolicus (strain ATCC BAA-1280 / DSM 17508 / OCM 812 / Nankai-3)).